Consider the following 460-residue polypeptide: Light-independent protochlorophyllide reductase subunit N (460 aa).

[4Fe-4S] cluster-binding residues include Cys-22, Cys-47, and Cys-107.

It belongs to the BchN/ChlN family. As to quaternary structure, protochlorophyllide reductase is composed of three subunits; ChlL, ChlN and ChlB. Forms a heterotetramer of two ChlB and two ChlN subunits. The cofactor is [4Fe-4S] cluster.

It catalyses the reaction chlorophyllide a + oxidized 2[4Fe-4S]-[ferredoxin] + 2 ADP + 2 phosphate = protochlorophyllide a + reduced 2[4Fe-4S]-[ferredoxin] + 2 ATP + 2 H2O. It functions in the pathway porphyrin-containing compound metabolism; chlorophyll biosynthesis (light-independent). Functionally, component of the dark-operative protochlorophyllide reductase (DPOR) that uses Mg-ATP and reduced ferredoxin to reduce ring D of protochlorophyllide (Pchlide) to form chlorophyllide a (Chlide). This reaction is light-independent. The NB-protein (ChlN-ChlB) is the catalytic component of the complex. This is Light-independent protochlorophyllide reductase subunit N from Thermosynechococcus vestitus (strain NIES-2133 / IAM M-273 / BP-1).